The primary structure comprises 535 residues: CTP synthase (535 aa).

The amidoligase domain stretch occupies residues 1 to 266 (MKTKFIFITG…DERVVEKLNI (266 aa)). CTP is bound at residue Ser-14. Ser-14 is a binding site for UTP. ATP is bound by residues 15-20 (SIGKGL) and Asp-72. Mg(2+) is bound by residues Asp-72 and Glu-140. CTP is bound by residues 147 to 149 (DIE), 187 to 192 (KTKPTQ), and Lys-223. UTP-binding positions include 187–192 (KTKPTQ) and Lys-223. The region spanning 292–534 (RIAIVGKYVN…VRAALIQRDA (243 aa)) is the Glutamine amidotransferase type-1 domain. Gly-354 contributes to the L-glutamine binding site. Residue Cys-381 is the Nucleophile; for glutamine hydrolysis of the active site. Residues 382-385 (LGMQ), Glu-405, and Arg-462 contribute to the L-glutamine site. Active-site residues include His-507 and Glu-509.

This sequence belongs to the CTP synthase family. In terms of assembly, homotetramer.

The catalysed reaction is UTP + L-glutamine + ATP + H2O = CTP + L-glutamate + ADP + phosphate + 2 H(+). It carries out the reaction L-glutamine + H2O = L-glutamate + NH4(+). It catalyses the reaction UTP + NH4(+) + ATP = CTP + ADP + phosphate + 2 H(+). The protein operates within pyrimidine metabolism; CTP biosynthesis via de novo pathway; CTP from UDP: step 2/2. Allosterically activated by GTP, when glutamine is the substrate; GTP has no effect on the reaction when ammonia is the substrate. The allosteric effector GTP functions by stabilizing the protein conformation that binds the tetrahedral intermediate(s) formed during glutamine hydrolysis. Inhibited by the product CTP, via allosteric rather than competitive inhibition. Its function is as follows. Catalyzes the ATP-dependent amination of UTP to CTP with either L-glutamine or ammonia as the source of nitrogen. Regulates intracellular CTP levels through interactions with the four ribonucleotide triphosphates. This chain is CTP synthase, found in Pelobacter propionicus (strain DSM 2379 / NBRC 103807 / OttBd1).